The primary structure comprises 292 residues: 4-hydroxy-tetrahydrodipicolinate synthase (292 aa).

Thr-45 provides a ligand contact to pyruvate. Catalysis depends on Tyr-133, which acts as the Proton donor/acceptor. The Schiff-base intermediate with substrate role is filled by Lys-162. Ile-204 contributes to the pyruvate binding site.

It belongs to the DapA family. In terms of assembly, homotetramer; dimer of dimers.

Its subcellular location is the cytoplasm. It carries out the reaction L-aspartate 4-semialdehyde + pyruvate = (2S,4S)-4-hydroxy-2,3,4,5-tetrahydrodipicolinate + H2O + H(+). It functions in the pathway amino-acid biosynthesis; L-lysine biosynthesis via DAP pathway; (S)-tetrahydrodipicolinate from L-aspartate: step 3/4. Functionally, catalyzes the condensation of (S)-aspartate-beta-semialdehyde [(S)-ASA] and pyruvate to 4-hydroxy-tetrahydrodipicolinate (HTPA). The sequence is that of 4-hydroxy-tetrahydrodipicolinate synthase from Oleidesulfovibrio alaskensis (strain ATCC BAA-1058 / DSM 17464 / G20) (Desulfovibrio alaskensis).